The primary structure comprises 302 residues: Homoserine O-acetyltransferase (302 aa).

Cysteine 142 (acyl-thioester intermediate) is an active-site residue. 2 residues coordinate substrate: lysine 163 and serine 192. Residue histidine 235 is the Proton acceptor of the active site. Glutamate 237 is a catalytic residue. Arginine 249 contributes to the substrate binding site.

It belongs to the MetA family.

Its subcellular location is the cytoplasm. It catalyses the reaction L-homoserine + acetyl-CoA = O-acetyl-L-homoserine + CoA. It participates in amino-acid biosynthesis; L-methionine biosynthesis via de novo pathway; O-acetyl-L-homoserine from L-homoserine: step 1/1. Transfers an acetyl group from acetyl-CoA to L-homoserine, forming acetyl-L-homoserine. The chain is Homoserine O-acetyltransferase from Geobacillus kaustophilus.